Reading from the N-terminus, the 735-residue chain is Probable ATP-dependent RNA helicase DHR2 (735 aa).

The span at 1–13 (MAANSNSRVASNH) shows a compositional bias: polar residues. The interval 1 to 29 (MAANSNSRVASNHTSKKQKVRRNIHPFTN) is disordered. The segment covering 14–24 (TSKKQKVRRNI) has biased composition (basic residues). Residues 91–257 (MSYIESNPVT…FNNAPILFVE (167 aa)) enclose the Helicase ATP-binding domain. ATP is bound at residue 104–111 (GETGSGKS). A DEAH box motif is present at residues 203–206 (DEAH). The Helicase C-terminal domain occupies 262 to 456 (DVKQYYLKAP…SPVLMLKRYG (195 aa)).

The protein belongs to the DEAD box helicase family. DEAH subfamily. Interacts with NOP19. Interacts with UBP10.

The protein localises to the nucleus. It localises to the nucleolus. It catalyses the reaction ATP + H2O = ADP + phosphate + H(+). Functionally, probable ATP-binding RNA helicase. Required for 18S rRNA synthesis. This chain is Probable ATP-dependent RNA helicase DHR2 (DHR2), found in Saccharomyces cerevisiae (strain ATCC 204508 / S288c) (Baker's yeast).